A 301-amino-acid chain; its full sequence is Glycerol-3-phosphate dehydrogenase [NAD(P)+] (301 aa).

Residues Trp13, Arg33, and Lys78 each coordinate NADPH. Lys78 and Gly106 together coordinate sn-glycerol 3-phosphate. Residue Ala110 coordinates NADPH. Sn-glycerol 3-phosphate is bound by residues Lys161, Asp214, Ser224, Arg225, and Asn226. The active-site Proton acceptor is the Lys161. Arg225 lines the NADPH pocket. NADPH is bound at residue Glu251.

Belongs to the NAD-dependent glycerol-3-phosphate dehydrogenase family.

The protein resides in the cytoplasm. It catalyses the reaction sn-glycerol 3-phosphate + NAD(+) = dihydroxyacetone phosphate + NADH + H(+). It carries out the reaction sn-glycerol 3-phosphate + NADP(+) = dihydroxyacetone phosphate + NADPH + H(+). Its pathway is membrane lipid metabolism; glycerophospholipid metabolism. Catalyzes the reduction of the glycolytic intermediate dihydroxyacetone phosphate (DHAP) to sn-glycerol 3-phosphate (G3P), the key precursor for phospholipid synthesis. This chain is Glycerol-3-phosphate dehydrogenase [NAD(P)+], found in Synechococcus sp. (strain RCC307).